Reading from the N-terminus, the 187-residue chain is Calmodulin-like protein 1 (187 aa).

Ala2 bears the N-acetylalanine mark. EF-hand domains lie at 8 to 43 (EQIVEFREAFSLFDKDGDGSITTKELGTVMRSLGQN), 44 to 79 (PTEAELQDMISEVDADSNGNIEFKEFLGLMARKLRD), 81 to 116 (DSEEELKEAFRVFDKDQNGFISAAELRHVMANIGER), and 117 to 152 (LTDEEVGEMISEADVDGDGQINYEEFVKCMMAKKRR). Asp21, Asp23, Asp25, Ser27, Glu32, Asp57, Asp59, Asn61, Asn63, Glu68, Asp94, Asp96, Asn98, Glu105, Asp130, Asp132, Asp134, Gln136, and Glu141 together coordinate Ca(2+). The segment at 153–187 (KRIEEKREHDGGSRTKSAGPSAAPASKRGQKCVIL) is disordered. The span at 154 to 165 (RIEEKREHDGGS) shows a compositional bias: basic and acidic residues. A compositionally biased stretch (low complexity) spans 169–178 (SAGPSAAPAS). Cys184 is subject to Cysteine methyl ester. Cys184 carries the S-farnesyl cysteine lipid modification. The propeptide at 185–187 (VIL) is removed in mature form.

This sequence belongs to the calmodulin family. As to expression, expressed in roots, etiolated shoots and flowers.

The protein localises to the membrane. Calcium-binding protein that binds and activates CAMK1, a calcium/calmodulin-dependent kinase. This Oryza sativa subsp. indica (Rice) protein is Calmodulin-like protein 1 (CML1).